Consider the following 293-residue polypeptide: Ribosomal RNA small subunit methyltransferase A (293 aa).

S-adenosyl-L-methionine contacts are provided by Asn-36, Leu-38, Gly-63, Glu-84, Asp-111, and Asn-132.

The protein belongs to the class I-like SAM-binding methyltransferase superfamily. rRNA adenine N(6)-methyltransferase family. RsmA subfamily.

Its subcellular location is the cytoplasm. The enzyme catalyses adenosine(1518)/adenosine(1519) in 16S rRNA + 4 S-adenosyl-L-methionine = N(6)-dimethyladenosine(1518)/N(6)-dimethyladenosine(1519) in 16S rRNA + 4 S-adenosyl-L-homocysteine + 4 H(+). Specifically dimethylates two adjacent adenosines (A1518 and A1519) in the loop of a conserved hairpin near the 3'-end of 16S rRNA in the 30S particle. May play a critical role in biogenesis of 30S subunits. The protein is Ribosomal RNA small subunit methyltransferase A of Treponema denticola (strain ATCC 35405 / DSM 14222 / CIP 103919 / JCM 8153 / KCTC 15104).